The sequence spans 398 residues: Serpin-Z1A (398 aa).

The RCL stretch occupies residues 343–367 (GTEAAASTAIKMVLQQARPPSVMDF).

The protein belongs to the serpin family.

In terms of biological role, inhibits chymotrypsin and cathepsin G in vitro. The polypeptide is Serpin-Z1A (WZCI) (Triticum aestivum (Wheat)).